Here is a 157-residue protein sequence, read N- to C-terminus: ATP synthase subunit b 1 (157 aa).

The chain crosses the membrane as a helical span at residues 7–29 (LFGQMVTFALLVWFTMKYVWPPL).

It belongs to the ATPase B chain family. F-type ATPases have 2 components, F(1) - the catalytic core - and F(0) - the membrane proton channel. F(1) has five subunits: alpha(3), beta(3), gamma(1), delta(1), epsilon(1). F(0) has three main subunits: a(1), b(2) and c(10-14). The alpha and beta chains form an alternating ring which encloses part of the gamma chain. F(1) is attached to F(0) by a central stalk formed by the gamma and epsilon chains, while a peripheral stalk is formed by the delta and b chains.

The protein resides in the cell inner membrane. F(1)F(0) ATP synthase produces ATP from ADP in the presence of a proton or sodium gradient. F-type ATPases consist of two structural domains, F(1) containing the extramembraneous catalytic core and F(0) containing the membrane proton channel, linked together by a central stalk and a peripheral stalk. During catalysis, ATP synthesis in the catalytic domain of F(1) is coupled via a rotary mechanism of the central stalk subunits to proton translocation. Its function is as follows. Component of the F(0) channel, it forms part of the peripheral stalk, linking F(1) to F(0). This Methylococcus capsulatus (strain ATCC 33009 / NCIMB 11132 / Bath) protein is ATP synthase subunit b 1.